Here is a 488-residue protein sequence, read N- to C-terminus: MRSGAERRGSSAAAPPSSPPPGRARPAGSDVSPALPPPAASQPRARDAGDARAQPRPLFQWSKWKKRMSMSSISSGSARRPVFDDKEDVNFDHFQILRAIGKGSFGKVCIVQKRDTEKMYAMKYMNKQQCIERDEVRNVFRELEILQEIEHVFLVNLWYSFQDEEDMFMVVDLLLGGDLRYHLQQNVQFSEDTVRLYICEMALALDYLRSQHIIHRDVKPDNILLDEQGHAHLTDFNIATIIKDGERATALAGTKPYMAPEIFHSFVNGGTGYSFEVDWWSVGVMAYELLRGWRPYDIHSSNAVESLVQLFSTVSVQYVPTWSKEMVALLRKLLTVNPEHRFSSLQDMQTAPSLAHVLWDDLSEKKVEPGFVPNKGRLHCDPTFELEEMILESRPLHKKKKRLAKNKSRDSSRDSSQSENDYLQDCLDAIQQDFVIFNREKLKRSQELMSEPPPGPETSDMTDSTADSEAEPTALPMCGSICPSSGSS.

Residues 1-56 (MRSGAERRGSSAAAPPSSPPPGRARPAGSDVSPALPPPAASQPRARDAGDARAQPR) form a disordered region. 3 positions are modified to phosphoserine: serine 10, serine 17, and serine 18. Low complexity predominate over residues 24 to 33 (ARPAGSDVSP). The Protein kinase domain maps to 94–354 (FQILRAIGKG…LQDMQTAPSL (261 aa)). ATP is bound by residues 100 to 108 (IGKGSFGKV) and lysine 123. Aspartate 217 functions as the Proton acceptor in the catalytic mechanism. Over residues 397-406 (HKKKKRLAKN) the composition is skewed to basic residues. Disordered regions lie at residues 397–420 (HKKK…QSEN) and 443–488 (KRSQ…SGSS).

It belongs to the protein kinase superfamily. Ser/Thr protein kinase family. It depends on Mg(2+) as a cofactor.

The enzyme catalyses L-seryl-[protein] + ATP = O-phospho-L-seryl-[protein] + ADP + H(+). It carries out the reaction L-threonyl-[protein] + ATP = O-phospho-L-threonyl-[protein] + ADP + H(+). The chain is Serine/threonine-protein kinase 32C from Mus musculus (Mouse).